A 90-amino-acid polypeptide reads, in one-letter code: UPF0223 protein lmo1058 (90 aa).

It belongs to the UPF0223 family.

This is UPF0223 protein lmo1058 from Listeria monocytogenes serovar 1/2a (strain ATCC BAA-679 / EGD-e).